Here is a 132-residue protein sequence, read N- to C-terminus: Small ribosomal subunit protein eS6 (132 aa).

It belongs to the eukaryotic ribosomal protein eS6 family.

In Methanosphaerula palustris (strain ATCC BAA-1556 / DSM 19958 / E1-9c), this protein is Small ribosomal subunit protein eS6.